Reading from the N-terminus, the 565-residue chain is Effector protease OspD3 (565 aa).

Belongs to the Toxin_15 family.

The protein localises to the secreted. Its function is as follows. Effector protease that disrupts necroptosis in host cells by mediating proteolytic cleavage of host RIPK1 and RIPK3. In Shigella flexneri, this protein is Effector protease OspD3.